A 206-amino-acid chain; its full sequence is Thymidylate kinase (206 aa).

Position 11–18 (11–18 (GIDGAGKT)) interacts with ATP.

It belongs to the thymidylate kinase family.

The catalysed reaction is dTMP + ATP = dTDP + ADP. In terms of biological role, phosphorylation of dTMP to form dTDP in both de novo and salvage pathways of dTTP synthesis. The polypeptide is Thymidylate kinase (Burkholderia lata (strain ATCC 17760 / DSM 23089 / LMG 22485 / NCIMB 9086 / R18194 / 383)).